Consider the following 385-residue polypeptide: Protein pelota homolog (385 aa).

A Glycyl lysine isopeptide (Lys-Gly) (interchain with G-Cter in SUMO2) cross-link involves residue lysine 162. 4 positions are modified to phosphoserine: serine 374, serine 380, serine 381, and serine 382.

It belongs to the eukaryotic release factor 1 family. Pelota subfamily. As to quaternary structure, component of the Pelota-HBS1L complex, also named Dom34-Hbs1 complex, composed of PELO and HBS1L. Interacts with PINK1. Interacts with ABCE1. Interacts with CNOT4. The cofactor is a divalent metal cation.

It localises to the cytoplasm. Component of the Pelota-HBS1L complex, a complex that recognizes stalled ribosomes and triggers the No-Go Decay (NGD) pathway. In the Pelota-HBS1L complex, PELO recognizes ribosomes stalled at the 3' end of an mRNA and engages stalled ribosomes by destabilizing mRNA in the mRNA channel. Following mRNA extraction from stalled ribosomes by the SKI complex, the Pelota-HBS1L complex promotes recruitment of ABCE1, which drives the disassembly of stalled ribosomes, followed by degradation of damaged mRNAs as part of the NGD pathway. As part of the PINK1-regulated signaling, upon mitochondrial damage is recruited to the ribosome/mRNA-ribonucleoprotein complex associated to mitochondrial outer membrane thereby enabling the recruitment of autophagy receptors and induction of mitophagy. The chain is Protein pelota homolog (PELO) from Bos taurus (Bovine).